A 547-amino-acid polypeptide reads, in one-letter code: Cytochrome P450 78A1 (547 aa).

Low complexity predominate over residues 84–94 (ASSRCPGAAAP). The segment at 84–104 (ASSRCPGAAAPRPRRDGPRRR) is disordered. Heme is bound at residue cysteine 490.

It belongs to the cytochrome P450 family. Heme is required as a cofactor. As to expression, shoot apex.

The sequence is that of Cytochrome P450 78A1 (CYP78A1) from Zea mays (Maize).